A 256-amino-acid polypeptide reads, in one-letter code: Alcohol dehydrogenase (256 aa).

NAD(+) is bound at residue 12-35; the sequence is FVAGLGGIGLDTSKELVKRDLKNL. Substrate is bound at residue Ser140. Tyr153 acts as the Proton acceptor in catalysis.

The protein belongs to the short-chain dehydrogenases/reductases (SDR) family. In terms of assembly, homodimer.

It catalyses the reaction a primary alcohol + NAD(+) = an aldehyde + NADH + H(+). It carries out the reaction a secondary alcohol + NAD(+) = a ketone + NADH + H(+). The polypeptide is Alcohol dehydrogenase (Adh) (Drosophila erecta (Fruit fly)).